Here is a 237-residue protein sequence, read N- to C-terminus: uncharacterized protein (237 aa).

Residues 119-237 (VTVRRLTPTD…PAGLDGGLPA (119 aa)) enclose the N-acetyltransferase domain.

This is an uncharacterized protein from Streptomyces virginiae (Streptomyces cinnamonensis).